The sequence spans 388 residues: Gastricsin (388 aa).

The first 16 residues, Met-1 to Ala-16, serve as a signal peptide directing secretion. The propeptide at Thr-17–Leu-59 is activation peptide. The Peptidase A1 domain maps to Tyr-73–Ala-385. The active site involves Asp-91. Disulfide bonds link Cys-104–Cys-109 and Cys-267–Cys-271. The active site involves Asp-276. Cys-310 and Cys-343 are disulfide-bonded.

It belongs to the peptidase A1 family.

It is found in the secreted. It catalyses the reaction More restricted specificity than pepsin A, but shows preferential cleavage at Tyr-|-Xaa bonds. High activity on hemoglobin.. With respect to regulation, inhibited by pepstatin. In terms of biological role, hydrolyzes a variety of proteins. This chain is Gastricsin (PGC), found in Callithrix jacchus (White-tufted-ear marmoset).